The sequence spans 361 residues: Dynein axonemal assembly factor 8 (361 aa).

2 disordered regions span residues 65-191 (DPAG…ERRK) and 309-334 (AQPGYGTARERVGSSSSSGHLGRRPL). Residues 136 to 157 (TLNTSASQSPRQGPQGEATRSP) show a composition bias toward polar residues. A phosphoserine mark is found at Ser142 and Ser144. The segment covering 321–334 (GSSSSSGHLGRRPL) has biased composition (low complexity).

It is found in the dynein axonemal particle. Its subcellular location is the cytoplasm. Its function is as follows. In cyliated cells, dynein axonemal particle-specific protein required for deployment of ODA to the axoneme. Interacts with outer dynein arm (ODA) subunits. In Bos taurus (Bovine), this protein is Dynein axonemal assembly factor 8 (DNAAF8).